The primary structure comprises 193 residues: Homeobox protein HD-12 (193 aa).

Residues Ser123–Met185 constitute a DNA-binding region (homeobox; TALE-type).

The protein belongs to the TALE/KNOX homeobox family.

It is found in the nucleus. The sequence is that of Homeobox protein HD-12 (HD-12) from Encephalitozoon cuniculi (strain GB-M1) (Microsporidian parasite).